A 308-amino-acid chain; its full sequence is Phenylcoumaran benzylic ether reductase Pyrc5 (308 aa).

Residues 11–17, R36, and K45 contribute to the NADP(+) site; that span reads GGTGYIG. K133 (proton acceptor) is an active-site residue. An NADP(+)-binding site is contributed by R137.

The protein belongs to the NmrA-type oxidoreductase family. Isoflavone reductase subfamily.

It catalyses the reaction (-)-dehydrodiconiferyl alcohol + NADPH + H(+) = (S)-isodihydrodehydrodiconiferyl alcohol + NADP(+). It carries out the reaction (+)-dehydrodiconiferyl alcohol + NADPH + H(+) = (R)-isodihydrodehydrodiconiferyl alcohol + NADP(+). Functionally, oxidoreductase involved in lignan biosynthesis. Catalyzes the NADPH-dependent reduction of phenylcoumaran benzylic ethers. Converts dehydrodiconiferyl alcohol (DDC) to isodihydrodehydrodiconiferyl alcohol (IDDDC). This chain is Phenylcoumaran benzylic ether reductase Pyrc5, found in Pyrus communis (Pear).